Consider the following 207-residue polypeptide: GTP cyclohydrolase 1 (207 aa).

Positions 88, 91, and 162 each coordinate Zn(2+).

This sequence belongs to the GTP cyclohydrolase I family. In terms of assembly, toroid-shaped homodecamer, composed of two pentamers of five dimers.

The catalysed reaction is GTP + H2O = 7,8-dihydroneopterin 3'-triphosphate + formate + H(+). Its pathway is cofactor biosynthesis; 7,8-dihydroneopterin triphosphate biosynthesis; 7,8-dihydroneopterin triphosphate from GTP: step 1/1. This chain is GTP cyclohydrolase 1, found in Sulfurisphaera tokodaii (strain DSM 16993 / JCM 10545 / NBRC 100140 / 7) (Sulfolobus tokodaii).